Consider the following 309-residue polypeptide: UPF0282 protein Saci_0277 (309 aa).

Belongs to the UPF0282 family.

This chain is UPF0282 protein Saci_0277, found in Sulfolobus acidocaldarius (strain ATCC 33909 / DSM 639 / JCM 8929 / NBRC 15157 / NCIMB 11770).